The primary structure comprises 314 residues: tRNA dimethylallyltransferase (314 aa).

An ATP-binding site is contributed by 12–19 (GPTASGKT). Position 14-19 (14-19 (TASGKT)) interacts with substrate. Interaction with substrate tRNA regions lie at residues 37–40 (DSAL) and 162–166 (QRIIR).

This sequence belongs to the IPP transferase family. Monomer. Mg(2+) is required as a cofactor.

The catalysed reaction is adenosine(37) in tRNA + dimethylallyl diphosphate = N(6)-dimethylallyladenosine(37) in tRNA + diphosphate. In terms of biological role, catalyzes the transfer of a dimethylallyl group onto the adenine at position 37 in tRNAs that read codons beginning with uridine, leading to the formation of N6-(dimethylallyl)adenosine (i(6)A). This Acinetobacter baumannii (strain SDF) protein is tRNA dimethylallyltransferase.